The following is an 88-amino-acid chain: Small ribosomal subunit protein uS17 (88 aa).

The protein belongs to the universal ribosomal protein uS17 family. In terms of assembly, part of the 30S ribosomal subunit.

One of the primary rRNA binding proteins, it binds specifically to the 5'-end of 16S ribosomal RNA. This Lawsonia intracellularis (strain PHE/MN1-00) protein is Small ribosomal subunit protein uS17.